Consider the following 399-residue polypeptide: Elongation factor Tu (399 aa).

One can recognise a tr-type G domain in the interval 10–204; sequence KPHVNIGTIG…AVDASIPEPE (195 aa). The interval 19-26 is G1; it reads GHVDHGKT. 19–26 serves as a coordination point for GTP; sequence GHVDHGKT. Mg(2+) is bound at residue Thr26. The G2 stretch occupies residues 60–64; the sequence is GITIN. The segment at 81–84 is G3; sequence DCPG. GTP contacts are provided by residues 81–85 and 136–139; these read DCPGH and NKCD. Residues 136-139 are G4; that stretch reads NKCD. Residues 174 to 176 form a G5 region; it reads SGL.

This sequence belongs to the TRAFAC class translation factor GTPase superfamily. Classic translation factor GTPase family. EF-Tu/EF-1A subfamily. As to quaternary structure, monomer.

The protein localises to the cytoplasm. The catalysed reaction is GTP + H2O = GDP + phosphate + H(+). Functionally, GTP hydrolase that promotes the GTP-dependent binding of aminoacyl-tRNA to the A-site of ribosomes during protein biosynthesis. The chain is Elongation factor Tu from Synechococcus sp. (strain CC9311).